The primary structure comprises 356 residues: 3-dehydroquinate synthase (356 aa).

NAD(+) contacts are provided by residues 106–110 (GVVGD), 130–131 (TT), K143, and K152. Zn(2+)-binding residues include E185, H248, and H265.

This sequence belongs to the sugar phosphate cyclases superfamily. Dehydroquinate synthase family. Co(2+) is required as a cofactor. It depends on Zn(2+) as a cofactor. The cofactor is NAD(+).

The protein localises to the cytoplasm. The catalysed reaction is 7-phospho-2-dehydro-3-deoxy-D-arabino-heptonate = 3-dehydroquinate + phosphate. It participates in metabolic intermediate biosynthesis; chorismate biosynthesis; chorismate from D-erythrose 4-phosphate and phosphoenolpyruvate: step 2/7. Its function is as follows. Catalyzes the conversion of 3-deoxy-D-arabino-heptulosonate 7-phosphate (DAHP) to dehydroquinate (DHQ). The polypeptide is 3-dehydroquinate synthase (Thermoanaerobacter pseudethanolicus (strain ATCC 33223 / 39E) (Clostridium thermohydrosulfuricum)).